Consider the following 169-residue polypeptide: Putative pre-16S rRNA nuclease (169 aa).

The segment covering 1-19 has biased composition (basic and acidic residues); the sequence is MTDSDHRLPDRPGEGDPGR. The segment at 1–24 is disordered; the sequence is MTDSDHRLPDRPGEGDPGRGRRIG.

It belongs to the YqgF nuclease family.

The protein resides in the cytoplasm. Could be a nuclease involved in processing of the 5'-end of pre-16S rRNA. This is Putative pre-16S rRNA nuclease from Mycobacterium sp. (strain KMS).